The sequence spans 154 residues: uncharacterized protein (154 aa).

The next 4 helical transmembrane spans lie at phenylalanine 20–glycine 42, phenylalanine 62–leucine 84, alanine 91–tyrosine 109, and isoleucine 113–methionine 132.

It localises to the cell membrane. This is an uncharacterized protein from Bacillus subtilis (strain 168).